The sequence spans 108 residues: Nucleoid-associated protein BMASAVP1_A1850 (108 aa).

Residues 84–108 (EATSQEKMSGMTSGLPLPPGFKLPF) form a disordered region. Residues 85–95 (ATSQEKMSGMT) are compositionally biased toward polar residues. The span at 99–108 (PLPPGFKLPF) shows a compositional bias: pro residues.

The protein belongs to the YbaB/EbfC family. Homodimer.

It is found in the cytoplasm. The protein localises to the nucleoid. In terms of biological role, binds to DNA and alters its conformation. May be involved in regulation of gene expression, nucleoid organization and DNA protection. This is Nucleoid-associated protein BMASAVP1_A1850 from Burkholderia mallei (strain SAVP1).